Here is an 83-residue protein sequence, read N- to C-terminus: MGDVILSPVSTEKTALLAEKENKLTLIVDRKATKEDIKREVESRFSVKVEGINILITKKGKKAIVKLAKEYSAEEIAERIGVF.

Belongs to the universal ribosomal protein uL23 family. In terms of assembly, part of the 50S ribosomal subunit. Contacts protein L29.

Functionally, binds to 23S rRNA. One of the proteins that surrounds the polypeptide exit tunnel on the outside of the ribosome. The protein is Large ribosomal subunit protein uL23 of Thermoplasma volcanium (strain ATCC 51530 / DSM 4299 / JCM 9571 / NBRC 15438 / GSS1).